The chain runs to 114 residues: Large ribosomal subunit protein bL19 (114 aa).

It belongs to the bacterial ribosomal protein bL19 family.

In terms of biological role, this protein is located at the 30S-50S ribosomal subunit interface and may play a role in the structure and function of the aminoacyl-tRNA binding site. This chain is Large ribosomal subunit protein bL19, found in Thermoanaerobacter sp. (strain X514).